We begin with the raw amino-acid sequence, 532 residues long: 5-methylcytosine-modifying enzyme 1 (532 aa).

335-337 (SLT) lines the L-ascorbate pocket. H345, D347, and H397 together coordinate Fe cation. 397–399 (HGT) is an L-ascorbate binding site.

The protein belongs to the TET family. Fe(2+) serves as cofactor.

Its subcellular location is the nucleus. It catalyses the reaction a 5-methyl-2'-deoxycytidine in DNA + L-ascorbate + O2 = a (8S,9S)-5-glyceryl-2'-deoxycytidine in DNA + glyoxylate + CO2. It carries out the reaction a 5-methyl-2'-deoxycytidine in DNA + L-ascorbate + O2 = a (8S,9R)-5-glyceryl-2'-deoxycytidine in DNA + glyoxylate + CO2. In terms of biological role, dioxygenase that catalyzes DNA modification by mediating the conversion of the modified genomic base 5-methylcytosine (5mC) into 5-glyceryl-methylcytosine (5gmC). Catalyzes the conjugation of a glyceryl moiety from L-ascorbate (vitamin C) to the methyl group of 5mC through a carbon-carbon bond. 5gmC DNA modification may be required during photosynthesis as an epigenetic mark that couteracts DNA methylation. The protein is 5-methylcytosine-modifying enzyme 1 of Chlamydomonas reinhardtii (Chlamydomonas smithii).